The sequence spans 657 residues: Translation factor GUF1, mitochondrial (657 aa).

A mitochondrion-targeting transit peptide spans 1 to 21 (MLKTLGLRSLCPSLGGRGFRR). Residues 56–240 (ENYRNFSIVA…TIVDRIPPPT (185 aa)) form the tr-type G domain. Residues 65–72 (AHVDHGKS), 132–136 (DTPGH), and 186–189 (NKID) contribute to the GTP site.

This sequence belongs to the TRAFAC class translation factor GTPase superfamily. Classic translation factor GTPase family. LepA subfamily.

The protein localises to the mitochondrion inner membrane. It catalyses the reaction GTP + H2O = GDP + phosphate + H(+). In terms of biological role, promotes mitochondrial protein synthesis. May act as a fidelity factor of the translation reaction, by catalyzing a one-codon backward translocation of tRNAs on improperly translocated ribosomes. Binds to mitochondrial ribosomes in a GTP-dependent manner. The sequence is that of Translation factor GUF1, mitochondrial from Candida glabrata (strain ATCC 2001 / BCRC 20586 / JCM 3761 / NBRC 0622 / NRRL Y-65 / CBS 138) (Yeast).